A 173-amino-acid polypeptide reads, in one-letter code: C-phycocyanin beta subunit (173 aa).

Asn-73 bears the N4-methylasparagine mark. (2R,3E)-phycocyanobilin is bound by residues Cys-83 and Cys-154.

The protein belongs to the phycobiliprotein family. In terms of assembly, heterodimer of an alpha and a beta subunit. Heterodimers further assemble into trimers and the trimers into hexamers. Post-translationally, contains two covalently linked bilin chromophores.

The protein resides in the cellular thylakoid membrane. Functionally, light-harvesting photosynthetic bile pigment-protein from the phycobiliprotein complex (phycobilisome, PBS). Phycocyanin is the major phycobiliprotein in the PBS rod. This chain is C-phycocyanin beta subunit (cpcB), found in Mastigocladus laminosus (Fischerella sp.).